Here is a 214-residue protein sequence, read N- to C-terminus: MMGLIGQKLGMTRIFTEEGTVYPVTIIKVKENRITQIKTISRDLYHAVQVTTGIKKSNKLLKPEIGHFLKSGVKIGKGLWEFKLTNSSINDFKIGQSLNLELFSNIKKVDIIGTSKGKGFCGTVKRWNFHTQDATHGNSLSHRAPGSIGQNQTPGRVFKGKKMAGHLGNHRVTVQNLDIVKIDLNQEIILVKGAVPGYSGGNIIIKPAIKTRGV.

Positions 134–153 (ATHGNSLSHRAPGSIGQNQT) are disordered. The residue at position 152 (Q152) is an N5-methylglutamine.

The protein belongs to the universal ribosomal protein uL3 family. As to quaternary structure, part of the 50S ribosomal subunit. Forms a cluster with proteins L14 and L19. Methylated by PrmB.

Its function is as follows. One of the primary rRNA binding proteins, it binds directly near the 3'-end of the 23S rRNA, where it nucleates assembly of the 50S subunit. The sequence is that of Large ribosomal subunit protein uL3 from Buchnera aphidicola subsp. Baizongia pistaciae (strain Bp).